Here is an 867-residue protein sequence, read N- to C-terminus: Bifunctional cis-abienol synthase, chloroplastic (867 aa).

The N-terminal 49 residues, 1–49 (MALPVYSLKSHIPITTIASAKMNYTPNKGMITANGRSRRIRLSPNKIVA), are a transit peptide targeting the chloroplast. Substrate is bound at residue Lys270. Residues 403–406 (DIDD) carry the DXDD motif motif. Lys490 lines the substrate pocket. Mg(2+)-binding residues include Asp622, Asp626, Asn763, Asp764, Thr767, and Glu771. Residues 622–626 (DDLYD) carry the DDXXD motif motif.

Belongs to the terpene synthase family. Tpsd subfamily. Mg(2+) is required as a cofactor.

It localises to the plastid. The protein resides in the chloroplast. The catalysed reaction is 8-hydroxycopalyl diphosphate = cis-abienol + diphosphate. The enzyme catalyses (2E,6E,10E)-geranylgeranyl diphosphate + H2O = 8-hydroxycopalyl diphosphate. The protein operates within terpene metabolism; oleoresin biosynthesis. Functionally, involved in the biosynthesis of cis-abienol, a labdane diterpene that can be used as synthesis precursor of ambergris substitution fragance products. Bifunctional class I/II enzyme in which both the bicyclization and water capture occur in the class II active site, resulting in an intermediary labda-13-en-8-ol diphosphate, which undergoes cleavage of the diphosphate group and final deprotonation at the class I active site. No activity with copalyl diphosphate as substrate. The polypeptide is Bifunctional cis-abienol synthase, chloroplastic (CAS) (Abies balsamea (Balsam fir)).